Here is a 791-residue protein sequence, read N- to C-terminus: Outer membrane protein assembly factor BamA (791 aa).

POTRA domains are found at residues 59–130 (NAIA…VTEK), 131–209 (PRID…VEEG), 212–298 (LYIK…VKEG), 301–383 (YKLG…IRKR), and 386–459 (VYIN…VKEQ).

It belongs to the BamA family. Part of the Bam complex.

It localises to the cell outer membrane. Its function is as follows. Part of the outer membrane protein assembly complex, which is involved in assembly and insertion of beta-barrel proteins into the outer membrane. This Nitratidesulfovibrio vulgaris (strain ATCC 29579 / DSM 644 / CCUG 34227 / NCIMB 8303 / VKM B-1760 / Hildenborough) (Desulfovibrio vulgaris) protein is Outer membrane protein assembly factor BamA.